The primary structure comprises 286 residues: Ribonuclease Z (286 aa).

Zn(2+)-binding residues include His-61, His-63, Asp-65, His-66, His-153, Asp-176, and His-240. Residue Asp-65 is the Proton acceptor of the active site.

It belongs to the RNase Z family. Homodimer. Zn(2+) is required as a cofactor.

It carries out the reaction Endonucleolytic cleavage of RNA, removing extra 3' nucleotides from tRNA precursor, generating 3' termini of tRNAs. A 3'-hydroxy group is left at the tRNA terminus and a 5'-phosphoryl group is left at the trailer molecule.. In terms of biological role, zinc phosphodiesterase, which displays some tRNA 3'-processing endonuclease activity. Probably involved in tRNA maturation, by removing a 3'-trailer from precursor tRNA. The protein is Ribonuclease Z of Mycolicibacterium gilvum (strain PYR-GCK) (Mycobacterium gilvum (strain PYR-GCK)).